A 610-amino-acid polypeptide reads, in one-letter code: Probable methyltransferase PMT22 (610 aa).

At 1-10 (MIKNIFQSRK) the chain is on the cytoplasmic side. The chain crosses the membrane as a helical; Signal-anchor for type II membrane protein span at residues 11 to 31 (LSGLCVLSILLVSVTILLLTN). The Lumenal segment spans residues 32-610 (DTIDLFPYLS…LVGLKSSWRP (579 aa)). Over residues 56-69 (STPISSPTNDSSPP) the composition is skewed to low complexity. The tract at residues 56–81 (STPISSPTNDSSPPLESPVNQTRVDD) is disordered. Residues Asn64, Asn75, Asn100, Asn400, Asn469, and Asn546 are each glycosylated (N-linked (GlcNAc...) asparagine).

This sequence belongs to the methyltransferase superfamily.

It is found in the endoplasmic reticulum membrane. The protein is Probable methyltransferase PMT22 of Arabidopsis thaliana (Mouse-ear cress).